Here is a 104-residue protein sequence, read N- to C-terminus: uncharacterized protein (104 aa).

A disordered region spans residues 51 to 70 (NPGRSLDNNKDVSDKGRSEF). A compositionally biased stretch (basic and acidic residues) spans 57-70 (DNNKDVSDKGRSEF).

This sequence belongs to the protein-tyrosine phosphatase family.

This is an uncharacterized protein from Xanthomonas campestris pv. campestris (strain ATCC 33913 / DSM 3586 / NCPPB 528 / LMG 568 / P 25).